Here is a 522-residue protein sequence, read N- to C-terminus: Cytochrome P450 4F4 (522 aa).

Helical transmembrane passes span 15–35 (TSLP…VRVL) and 87–107 (GFMT…PDVI). Residues E328 and C468 each contribute to the heme site.

The protein belongs to the cytochrome P450 family. Requires heme as cofactor. As to expression, expressed in hepatocytes. High expression in liver and kidney. Lower expression in brain.

The protein resides in the endoplasmic reticulum membrane. Its subcellular location is the microsome membrane. It carries out the reaction (5Z,8Z,11Z,14Z)-eicosatetraenoate + reduced [NADPH--hemoprotein reductase] + O2 = 20-hydroxy-(5Z,8Z,11Z,14Z)-eicosatetraenoate + oxidized [NADPH--hemoprotein reductase] + H2O + H(+). The enzyme catalyses leukotriene B4 + reduced [NADPH--hemoprotein reductase] + O2 = 20-hydroxy-leukotriene B4 + oxidized [NADPH--hemoprotein reductase] + H2O + H(+). The catalysed reaction is 6-trans-leukotriene B4 + reduced [NADPH--hemoprotein reductase] + O2 = 20-hydroxy-6-trans-leukotriene B4 + oxidized [NADPH--hemoprotein reductase] + H2O + H(+). It catalyses the reaction prostaglandin A1 + reduced [NADPH--hemoprotein reductase] + O2 = 20-hydroxy prostaglandin A1 + oxidized [NADPH--hemoprotein reductase] + H2O + H(+). It carries out the reaction prostaglandin E1 + reduced [NADPH--hemoprotein reductase] + O2 = 20-hydroxy prostaglandin E1 + oxidized [NADPH--hemoprotein reductase] + H2O + H(+). In terms of biological role, a cytochrome P450 monooxygenase involved in the metabolism of arachidonic acid and its oxygenated derivatives. Mechanistically, uses molecular oxygen inserting one oxygen atom into a substrate, and reducing the second into a water molecule, with two electrons provided by NADPH via cytochrome P450 reductase (CPR; NADPH-ferrihemoprotein reductase). Participates in the conversion of arachidonic acid to omega-hydroxyeicosatetraenoic acid (20-HETE), a signaling molecule acting both as vasoconstrictive and natriuretic with overall effect on arterial blood pressure. Hydroxylates the terminal carbon (omega-hydroxylation) of inflammatory lipid mediators, including prostaglandin (PG) A1, PGE1 and leukotriene B4 (LTB4), and may play a role in inactivation of these oxylipins during the resolution of inflammation. The protein is Cytochrome P450 4F4 of Rattus norvegicus (Rat).